The chain runs to 419 residues: UDP-N-acetylglucosamine 1-carboxyvinyltransferase (419 aa).

Phosphoenolpyruvate is bound at residue 22–23; it reads KN. Residue R93 participates in UDP-N-acetyl-alpha-D-glucosamine binding. C117 serves as the catalytic Proton donor. C117 is modified (2-(S-cysteinyl)pyruvic acid O-phosphothioketal). UDP-N-acetyl-alpha-D-glucosamine is bound by residues D307 and I329.

This sequence belongs to the EPSP synthase family. MurA subfamily.

It localises to the cytoplasm. It catalyses the reaction phosphoenolpyruvate + UDP-N-acetyl-alpha-D-glucosamine = UDP-N-acetyl-3-O-(1-carboxyvinyl)-alpha-D-glucosamine + phosphate. It participates in cell wall biogenesis; peptidoglycan biosynthesis. Its function is as follows. Cell wall formation. Adds enolpyruvyl to UDP-N-acetylglucosamine. The polypeptide is UDP-N-acetylglucosamine 1-carboxyvinyltransferase (Shewanella sp. (strain MR-7)).